The following is a 1020-amino-acid chain: 5'-3' exoribonuclease 3 (1020 aa).

The segment at 113-144 (QQRSRRFRSAKDASDAAAEEERLREEFEREGR) is disordered. A compositionally biased stretch (basic and acidic residues) spans 121 to 144 (SAKDASDAAAEEERLREEFEREGR). The CCHC-type zinc finger occupies 262-279 (ERCFLCGQMGHFASNCEG). 2 disordered regions span residues 411-440 (QHQRQAERVKRDKAGKATKRMDDEAPTVQP) and 452-483 (RLASAPTPSPFQSNDGRSAPHQKVRRLSPGSS). A compositionally biased stretch (basic and acidic residues) spans 414–433 (RQAERVKRDKAGKATKRMDD). Residues 487 to 523 (AIVDVENSLESDERENKEELKTKLKELIREKSDAFNS) adopt a coiled-coil conformation. Low complexity predominate over residues 831-844 (NNHGMHNNHGMHNN). Disordered stretches follow at residues 831–859 (NNHGMHNNHGMHNNQGRQNPPGSVSGRHL), 875–897 (TDRYQTPTDVPAPGYGYNPPQYV), and 911–1020 (PGAQ…RHRY). 2 stretches are compositionally biased toward low complexity: residues 911-923 (PGAQGYAQPAPYQ) and 960-972 (GNHQNQHQQQQWH). Positions 1000 to 1020 (RGRGRGSHHHHDQGGNPRHRY) are enriched in basic residues.

Belongs to the 5'-3' exonuclease family. XRN2/RAT1 subfamily. In terms of tissue distribution, expressed in roots, leaves, stems and flowers.

Its subcellular location is the nucleus. Functionally, possesses 5'-&gt;3' exoribonuclease activity. Acts as an endogenous post-transcriptional gene silencing (PTGS) suppressor. Degrades miRNA-derived loops, excised during miRNA maturation in the nucleus. Required for proper development. Involved in pre-rRNA processing. Involved with XRN2 in the 5'-end exonucleolytic processing of 5.8S and 25S rRNAs. Contributes with XRN2 to polyadenylation-dependent nuclear RNA surveillance. Involved in the degradation of aberrant polyadenylated pre-rRNA through 5'-end processing. The sequence is that of 5'-3' exoribonuclease 3 from Arabidopsis thaliana (Mouse-ear cress).